Reading from the N-terminus, the 404-residue chain is MSPSDVPINWKRNLTVTWLGCFLTGAAFSLVMPFLPLYVEQLGVTGHSALNMWSGLVFSITFLFSAIASPFWGGLADRKGRKIILLRSALGMAIVMLLMGMAQNIWQFLILRALLGLLGGFIPNANALIATQVPRHKSGWALGTLSTGGVSGALLGPLAGGLLADHYGLRPVFFITASVLFICFLLTFFFIRENFLPVSKKEMLHVREVVASLKNPRLVLSLFVTTLIIQVATGSIAPILTLYVRELAGNVSNIAFISGMIASVPGVAALLSAPRLGKLGDRIGPEKILIVALIISVLLLIPMSFVQTPWQLALLRFLLGAADGALLPAVQTLLVYNSTNQIAGRIFSYNQSFRDIGNVTGPLMGAAISASYGFRAVFCVTAGVVLFNAIYSWNSLRRRRLAIE.

Transmembrane regions (helical) follow at residues 19–39 (LGCF…PLYV), 56–76 (LVFS…GGLA), 90–110 (LGMA…QFLI), 113–133 (ALLG…ATQV), 144–164 (TLST…GLLA), 171–191 (PVFF…FFFI), 222–242 (LFVT…ILTL), 254–274 (IAFI…LSAP), 288–308 (ILIV…FVQT), 317–337 (FLLG…LVYN), and 376–396 (AVFC…WNSL).

The protein belongs to the major facilitator superfamily. DHA1 family. MdtG (TC 2.A.1.2.20) subfamily.

It localises to the cell inner membrane. This chain is Multidrug resistance protein MdtG, found in Salmonella typhi.